The primary structure comprises 219 residues: MSRTFRAWQCVGALCALSPLLPAYSSEGVREVPPSQSPQVVVAYEPIRPGDQLLKIGIVAGCQLYIAGGNGTNGSSSSGTNGNGNGKLLGGGGFHLGYEYFFTKNFSLGGQVSFECYRTTGSNYYFSVPITVNPTYTFAVGRWRIPLSLGVGLNIQSYLSKKAPGLIAEASAGLYYQYTPDWSIGGIVAYTQLGDIASSPDKCRAVGLATIDFGVRYHF.

It to T.pallidum TP_0126.

This is an uncharacterized protein from Treponema pallidum (strain Nichols).